The primary structure comprises 236 residues: CD81 antigen (236 aa).

Topologically, residues 1–12 are cytoplasmic; it reads MGVEGCTKCIKY. Residues 13–33 form a helical membrane-spanning segment; it reads LLFVFNFVFWLAGGVILGVAL. Residues 34–63 lie on the Extracellular side of the membrane; the sequence is WLRHDPQTTTLLYLELGDKPAPSTFYVGIY. The chain crosses the membrane as a helical span at residues 64–84; the sequence is ILIAVGAVMMFVGFLGCYGAI. The Cytoplasmic portion of the chain corresponds to 85-89; sequence QESQC. Residues 90-112 form a helical membrane-spanning segment; the sequence is LLGTFFTCLVILFACEVAAGIWG. The Extracellular segment spans residues 113 to 201; sequence FVNKDQIAKD…QKIDELFSGK (89 aa). Disulfide bonds link C156–C190 and C157–C175. A helical transmembrane segment spans residues 202–224; it reads LYLIGIAAIVVAVIMIFEMILSM. Residue E219 coordinates cholesterol. The Cytoplasmic segment spans residues 225 to 236; it reads VLCCGIRNSSVY.

It belongs to the tetraspanin (TM4SF) family. As to quaternary structure, homodimer. Part of a complex composed of CD19, CR2/CD21, CD81 and IFITM1/CD225 in the membrane of mature B cells. Interacts (via the second extracellular domain) with CD19; this interaction is initiated early during biosynthesis in the ER and enables trafficking of only properly folded CD19. Part of a complex that includes MHC class II/HLA-DR molecules and IFITM1. Interacts with IFITM1. Interacts with IFITM2 and IFITM3. Part of integrin-tetraspanin complex composed of CD9, CD81, beta-1 and beta-2 integrins in the membrane of monocyte/macrophages. Interacts (via the second extracellular domain) with integrin ITGAV:ITGB3. Interacts with CD247/CD3 zeta, ICAM1 and CD9 at the immune synapse on T cell membrane. Part of a GPCR-tetraspanin complex consisting at least of ADGRG1, CD81, possibly CD9, and GNA11 in which CD81 enhances the association of ADGRG1 with GNA11. Part of a complex composed of CD9, CD81, PTGFRN and IGSF8. Interacts directly with IGSF8. Interacts with CD53 and SCIMP. Interacts with SAMHD1 (via its C-terminus). Interacts with glypican GPC3 and with the transcriptional repressor HHEX; binding to GPC3 decreases the availability of free CD81 for binding to HHEX, resulting in nuclear translocation of HHEX and transcriptional repression. Interacts with CLDN1. Interacts with CLDN6 and CLDN9. In terms of processing, not glycosylated. Post-translationally, likely constitutively palmitoylated at low levels. Protein palmitoylation is up-regulated upon coligation of BCR and CD9-C2R-CD81 complexes in lipid rafts.

Its subcellular location is the cell membrane. It is found in the basolateral cell membrane. Its function is as follows. Structural component of specialized membrane microdomains known as tetraspanin-enriched microdomains (TERMs), which act as platforms for receptor clustering and signaling. Essential for trafficking and compartmentalization of CD19 receptor on the surface of activated B cells. Upon initial encounter with microbial pathogens, enables the assembly of CD19-CR2/CD21 and B cell receptor (BCR) complexes at signaling TERMs, lowering the threshold dose of antigen required to trigger B cell clonal expansion and antibody production. In T cells, facilitates the localization of CD247/CD3 zeta at antigen-induced synapses with B cells, providing for costimulation and polarization toward T helper type 2 phenotype. Present in MHC class II compartments, may also play a role in antigen presentation. Can act both as positive and negative regulator of homotypic or heterotypic cell-cell fusion processes. Positively regulates sperm-egg fusion and may be involved in acrosome reaction. In myoblasts, associates with CD9 and PTGFRN and inhibits myotube fusion during muscle regeneration. In macrophages, associates with CD9 and beta-1 and beta-2 integrins, and prevents macrophage fusion into multinucleated giant cells specialized in ingesting complement-opsonized large particles. Also prevents the fusion of mononuclear cell progenitors into osteoclasts in charge of bone resorption. May regulate the compartmentalization of enzymatic activities. In T cells, defines the subcellular localization of dNTPase SAMHD1 and permits its degradation by the proteasome, thereby controlling intracellular dNTP levels. Also involved in cell adhesion and motility. Positively regulates integrin-mediated adhesion of macrophages, particularly relevant for the inflammatory response in the lung. This chain is CD81 antigen (Cd81), found in Rattus norvegicus (Rat).